The sequence spans 583 residues: MDLWHIFLERILVACRVSASVFANFGCGLYSSWKLICGDHDSASGLRAGLATPTQRGKATGDNGTTGTPARTIGKPQARIATAMSTATCARFCTPLSSGTAGSTSKLTTGNGSGNTMTSAYKIPSNNSTTANDSSNTETTFTFKLGRSNGRSSSNVASSESSDPLESDYSEEDPEQEQQRPDPATNSRSSSTATTTTTSSADHDNDVDEEDEEDDENEGEGNGRDADDATHDSSESIEEDDGNETDDEEDDDESEESSSVQTAKGVRKYHLDDYQIIKTVGTGTFGRVCLCRDRISEKYCAMKILAMTEVIRLKQIEHVKNERNILREIRHPFVISLEWSTKDDSNLYMIFDYVCGGELFTYLRNAGKFTSQTSNFYAAEIVSALEYLHSLQIVYRDLKPENLLINRDGHLKITDFGFAKKLRDRTWTLCGTPEYIAPEIIQSKGHNKAVDWWALGVLIYEMLVGYPPFYDEQPFGIYEKILSGKIEWERHMDPIAKDLIKKLLVNDRTKRLGNMKNGADDVKRHRWFKHLNWNDVYSKKLKPPILPDVHHDGDTKNFDDYPEKDWKPAKAVDQRDLQYFNDF.

2 disordered regions span residues A51–K75 and S98–K264. 2 stretches are compositionally biased toward polar residues: residues T52–P69 and S98–L107. Low complexity predominate over residues T108 to S162. The span at D163 to Q176 shows a compositional bias: acidic residues. Residues P181–S200 show a composition bias toward low complexity. Acidic residues predominate over residues N205–G219. Residues G221–S234 are compositionally biased toward basic and acidic residues. The span at E235–E256 shows a compositional bias: acidic residues. Residues Y274 to F528 form the Protein kinase domain. Residues V280–V288 and K303 contribute to the ATP site. Catalysis depends on D397, which acts as the Proton acceptor. Positions K529–F583 constitute an AGC-kinase C-terminal domain.

This sequence belongs to the protein kinase superfamily. AGC Ser/Thr protein kinase family. cAMP subfamily. As to expression, expressed in embryonic mesoderm, and the optic lamina, wing disk and leg disks of third instar larvae. More abundant in adult head than adult body.

It catalyses the reaction L-seryl-[protein] + ATP = O-phospho-L-seryl-[protein] + ADP + H(+). The enzyme catalyses L-threonyl-[protein] + ATP = O-phospho-L-threonyl-[protein] + ADP + H(+). Its function is as follows. Does not have an essential role in development. In Drosophila melanogaster (Fruit fly), this protein is cAMP-dependent protein kinase catalytic subunit 3 (Pka-C3).